Consider the following 662-residue polypeptide: DCC-interacting protein 13-beta (662 aa).

Residues 3–268 form the BAR domain; the sequence is AVDKLLLEEA…ESVYTPDIDV (266 aa). The PH domain occupies 277–375; sequence LIQKTGYLNL…WICAINNISR (99 aa). The PID domain occupies 486–635; it reads SLLQQMFIVR…LMLSVPLTND (150 aa). The interval 643–662 is disordered; it reads DQADDTGGSPSDHRGAESEA. Residues 653–662 show a composition bias toward basic and acidic residues; that stretch reads SDHRGAESEA.

In terms of assembly, homodimer. Homotetramer. Binds RAB5A/Rab5 through an N-terminal domain. This interaction is essential for its recruitment to endosomal membranes as well as its role in cell proliferation. Binds subunits of the NuRD/MeCP1 complex. Interacts with FSHR; interaction is independent of follicle stimulating hormone stimulation. Interacts with APPL1; the interaction is decreased by adiponectin in a time-dependent manner. Forms a complex comprising APPL1, RUVBL2, CTNNB1, HDAC1 and HDAC2; interaction reduces interaction between CTNNB1, HDAC1, HDAC2 and RUVBL2 leading to the decrease of deacetylase activity of this complex; affects the recruitment of repressive complexes to the Wnt target genes. Interacts (via BAR domain) with TBC1D1; interaction is dependent of TBC1D1 phosphorylation at 'Ser-235'; interaction diminishes the phosphorylation of TBC1D1 at 'Thr-596', resulting in inhibition of SLC2A4 translocation and glucose uptake. Interacts with ANXA2; targets APPL2 to endosomes and acting in parallel to RAB5A. Interacts with RAB31 (in GTP-bound form); interaction contributes to or enhances recruitment of APPL2 to the phagosomes; interaction enhances Fc-gamma receptor-mediated phagocytosis through PI3K/Akt signaling in macrophages. Interacts with PIK3R1; forms a complex with PIK3R1 and APPL1. Interacts (via BAR domain) with ADIPOR1; hinders the accessibility of APPL1 to ADIPOR1; negatively regulates adiponectin signaling; ADIPOQ dissociates this interaction and facilitates the recruitment of APPL1 to ADIPOR1. Interacts (via BAR domain) with ADIPOR2; ADIPOQ dissociates this interaction.

Its subcellular location is the early endosome membrane. It localises to the nucleus. The protein localises to the cell membrane. The protein resides in the endosome membrane. It is found in the cytoplasm. Its subcellular location is the cytoplasmic vesicle. It localises to the phagosome. The protein localises to the cell projection. The protein resides in the ruffle. It is found in the ruffle membrane. Its subcellular location is the phagosome membrane. Functionally, multifunctional adapter protein that binds to various membrane receptors, nuclear factors and signaling proteins to regulate many processes, such as cell proliferation, immune response, endosomal trafficking and cell metabolism. Regulates signaling pathway leading to cell proliferation through interaction with RAB5A and subunits of the NuRD/MeCP1 complex. Plays a role in immune response by modulating phagocytosis, inflammatory and innate immune responses. In macrophages, enhances Fc-gamma receptor-mediated phagocytosis through interaction with RAB31 leading to activation of PI3K/Akt signaling. In response to LPS, modulates inflammatory responses by playing a key role on the regulation of TLR4 signaling and in the nuclear translocation of RELA/NF-kappa-B p65 and the secretion of pro- and anti-inflammatory cytokines. Also functions as a negative regulator of innate immune response via inhibition of AKT1 signaling pathway by forming a complex with APPL1 and PIK3R1. Plays a role in endosomal trafficking of TGFBR1 from the endosomes to the nucleus. Plays a role in cell metabolism by regulating adiponecting ans insulin signaling pathways and adaptative thermogenesis. In muscle, negatively regulates adiponectin-simulated glucose uptake and fatty acid oyidation by inhibiting adiponectin signaling pathway through APPL1 sequestration thereby antagonizing APPL1 action. In muscles, negatively regulates insulin-induced plasma membrane recruitment of GLUT4 and glucose uptake through interaction with TBC1D1. Plays a role in cold and diet-induced adaptive thermogenesis by activating ventromedial hypothalamus (VMH) neurons throught AMPK inhibition which enhances sympathetic outflow to subcutaneous white adipose tissue (sWAT), sWAT beiging and cold tolerance. Also plays a role in other signaling pathways namely Wnt/beta-catenin, HGF and glucocorticoid receptor signaling. Positive regulator of beta-catenin/TCF-dependent transcription through direct interaction with RUVBL2/reptin resulting in the relief of RUVBL2-mediated repression of beta-catenin/TCF target genes by modulating the interactions within the beta-catenin-reptin-HDAC complex. May affect adult neurogenesis in hippocampus and olfactory system via regulating the sensitivity of glucocorticoid receptor. Required for fibroblast migration through HGF cell signaling. In Rattus norvegicus (Rat), this protein is DCC-interacting protein 13-beta.